Here is a 95-residue protein sequence, read N- to C-terminus: Pyrimidine/purine nucleoside phosphorylase (95 aa).

It belongs to the nucleoside phosphorylase PpnP family.

The catalysed reaction is a purine D-ribonucleoside + phosphate = a purine nucleobase + alpha-D-ribose 1-phosphate. It carries out the reaction adenosine + phosphate = alpha-D-ribose 1-phosphate + adenine. It catalyses the reaction cytidine + phosphate = cytosine + alpha-D-ribose 1-phosphate. The enzyme catalyses guanosine + phosphate = alpha-D-ribose 1-phosphate + guanine. The catalysed reaction is inosine + phosphate = alpha-D-ribose 1-phosphate + hypoxanthine. It carries out the reaction thymidine + phosphate = 2-deoxy-alpha-D-ribose 1-phosphate + thymine. It catalyses the reaction uridine + phosphate = alpha-D-ribose 1-phosphate + uracil. The enzyme catalyses xanthosine + phosphate = alpha-D-ribose 1-phosphate + xanthine. Its function is as follows. Catalyzes the phosphorolysis of diverse nucleosides, yielding D-ribose 1-phosphate and the respective free bases. Can use uridine, adenosine, guanosine, cytidine, thymidine, inosine and xanthosine as substrates. Also catalyzes the reverse reactions. The protein is Pyrimidine/purine nucleoside phosphorylase of Yersinia pestis bv. Antiqua (strain Antiqua).